The chain runs to 282 residues: Acetyl-coenzyme A carboxylase carboxyl transferase subunit beta (282 aa).

One can recognise a CoA carboxyltransferase N-terminal domain in the interval 26–282; the sequence is GLWHQTPTGK…VSKTVKLLVH (257 aa).

It belongs to the AccD/PCCB family. In terms of assembly, acetyl-CoA carboxylase is a heterohexamer composed of biotin carboxyl carrier protein (AccB), biotin carboxylase (AccC) and two subunits each of ACCase subunit alpha (AccA) and ACCase subunit beta (AccD).

The protein localises to the cytoplasm. The catalysed reaction is N(6)-carboxybiotinyl-L-lysyl-[protein] + acetyl-CoA = N(6)-biotinyl-L-lysyl-[protein] + malonyl-CoA. Its pathway is lipid metabolism; malonyl-CoA biosynthesis; malonyl-CoA from acetyl-CoA: step 1/1. Functionally, component of the acetyl coenzyme A carboxylase (ACC) complex. Biotin carboxylase (BC) catalyzes the carboxylation of biotin on its carrier protein (BCCP) and then the CO(2) group is transferred by the transcarboxylase to acetyl-CoA to form malonyl-CoA. This is Acetyl-coenzyme A carboxylase carboxyl transferase subunit beta from Flavobacteriaceae bacterium (strain 3519-10).